The primary structure comprises 350 residues: C-X-C chemokine receptor type 1 (350 aa).

The Extracellular segment spans residues 1–39; sequence MSNITDPQMWDFDDLNFTGMPPADEDYSPCMLETETLNK. 2 N-linked (GlcNAc...) asparagine glycosylation sites follow: Asn3 and Asn16. A helical membrane pass occupies residues 40–66; the sequence is YVVIIAYALVFLLSLLGNSLVMLVILY. Residues 67 to 75 are Cytoplasmic-facing; that stretch reads SRVGRSVTD. A helical membrane pass occupies residues 76-96; it reads VYLLNLALADLLFALTLPIWA. Residues 97–111 lie on the Extracellular side of the membrane; it reads ASKVNGWIFGTFLCK. Cys110 and Cys187 are oxidised to a cystine. Residues 112–133 form a helical membrane-spanning segment; that stretch reads VVSLLKEVNFYSGILLLACISV. Residues 134–154 lie on the Cytoplasmic side of the membrane; the sequence is DRYLAIVHATRTLTQKRHLVK. The helical transmembrane segment at 155 to 174 threads the bilayer; it reads FVCLGCWGLSMNLSLPFFLF. Topologically, residues 175–199 are extracellular; the sequence is RQAYHPNNSSPVCYEVLGNDTAKWR. A helical transmembrane segment spans residues 200–220; that stretch reads MVLRILPHTFGFIVPLFVMLF. Over 221-242 the chain is Cytoplasmic; it reads CYGFTLRTLFKAHMGQKHRAMR. A helical membrane pass occupies residues 243–264; it reads VIFAVVLIFLLCWLPYNLVLLA. Residues 265 to 285 are Extracellular-facing; the sequence is DTLMRTQVIQESCERRNNIGR. A helical membrane pass occupies residues 286 to 308; sequence ALDATEILGFLHSCLNPIIYAFI. Over 309 to 350 the chain is Cytoplasmic; it reads GQNFRHGFLKILAMHGLVSKEFLARHRVTSYTSSSVNVSSNL.

The protein belongs to the G-protein coupled receptor 1 family. In terms of assembly, interacts with IL8. Interacts with GNAI2.

The protein resides in the cell membrane. Functionally, receptor to interleukin-8, which is a powerful neutrophils chemotactic factor. Binding of IL-8 to the receptor causes activation of neutrophils. This response is mediated via a G-protein that activates a phosphatidylinositol-calcium second messenger system. The sequence is that of C-X-C chemokine receptor type 1 (CXCR1) from Homo sapiens (Human).